The sequence spans 519 residues: Cytosol aminopeptidase (519 aa).

At serine 42 the chain carries Phosphoserine. Lysine 45 is subject to N6-succinyllysine. Position 54 is a phosphoserine (serine 54). Lysine 61 and lysine 103 each carry N6-succinyllysine. A phosphoserine mark is found at serine 180 and serine 194. Residues leucine 202, methionine 203, and threonine 205 each coordinate Zn(2+). Serine 238 bears the Phosphoserine mark. 2 residues coordinate Zn(2+): lysine 282 and aspartate 287. Substrate-binding residues include lysine 282, aspartate 287, serine 292, and lysine 294. Aspartate 287 is a binding site for Mg(2+). Lysine 294 is a catalytic residue. Zn(2+) is bound by residues arginine 303, aspartate 305, aspartate 364, and glutamate 366. Aspartate 305 and aspartate 364 together coordinate substrate. Residues aspartate 364 and glutamate 366 each contribute to the Mg(2+) site. Arginine 368 is a catalytic residue. Position 455 is an N6-acetyllysine; alternate (lysine 455). At lysine 455 the chain carries N6-succinyllysine; alternate. Lysine 476 carries the N6-succinyllysine modification. Lysine 489 is subject to N6-acetyllysine; alternate. At lysine 489 the chain carries N6-succinyllysine; alternate.

Belongs to the peptidase M17 family. As to quaternary structure, homohexamer. Zn(2+) serves as cofactor. Requires Mn(2+) as cofactor.

It localises to the cytoplasm. The catalysed reaction is Release of an N-terminal amino acid, Xaa-|-Yaa-, in which Xaa is preferably Leu, but may be other amino acids including Pro although not Arg or Lys, and Yaa may be Pro. Amino acid amides and methyl esters are also readily hydrolyzed, but rates on arylamides are exceedingly low.. It carries out the reaction an S-substituted L-cysteinylglycine + H2O = an S-substituted L-cysteine + glycine. It catalyses the reaction L-cysteinylglycine + H2O = L-cysteine + glycine. The enzyme catalyses S-benzyl-L-cysteinylglycine + H2O = S-benzyl-L-cysteine + glycine. The catalysed reaction is Release of N-terminal proline from a peptide.. Zofenoprilat inhibits Cys-Gly hydrolysis activity. In terms of biological role, cytosolic metallopeptidase that catalyzes the removal of unsubstituted N-terminal hydrophobic amino acids from various peptides. The presence of Zn(2+) ions is essential for the peptidase activity, and the association with other cofactors can modulate the substrate spectificity of the enzyme. For instance, in the presence of Mn(2+), it displays a specific Cys-Gly hydrolyzing activity of Cys-Gly-S-conjugates. Involved in the metabolism of glutathione and in the degradation of glutathione S-conjugates, which may play a role in the control of the cell redox status. This Bos taurus (Bovine) protein is Cytosol aminopeptidase.